Consider the following 348-residue polypeptide: Phosphoribosylformylglycinamidine cyclo-ligase (348 aa).

It belongs to the AIR synthase family.

The protein resides in the cytoplasm. The enzyme catalyses 2-formamido-N(1)-(5-O-phospho-beta-D-ribosyl)acetamidine + ATP = 5-amino-1-(5-phospho-beta-D-ribosyl)imidazole + ADP + phosphate + H(+). It participates in purine metabolism; IMP biosynthesis via de novo pathway; 5-amino-1-(5-phospho-D-ribosyl)imidazole from N(2)-formyl-N(1)-(5-phospho-D-ribosyl)glycinamide: step 2/2. This is Phosphoribosylformylglycinamidine cyclo-ligase from Cereibacter sphaeroides (strain ATCC 17029 / ATH 2.4.9) (Rhodobacter sphaeroides).